Consider the following 416-residue polypeptide: Gamma-glutamyl phosphate reductase (416 aa).

It belongs to the gamma-glutamyl phosphate reductase family.

It localises to the cytoplasm. It catalyses the reaction L-glutamate 5-semialdehyde + phosphate + NADP(+) = L-glutamyl 5-phosphate + NADPH + H(+). It functions in the pathway amino-acid biosynthesis; L-proline biosynthesis; L-glutamate 5-semialdehyde from L-glutamate: step 2/2. Its function is as follows. Catalyzes the NADPH-dependent reduction of L-glutamate 5-phosphate into L-glutamate 5-semialdehyde and phosphate. The product spontaneously undergoes cyclization to form 1-pyrroline-5-carboxylate. This chain is Gamma-glutamyl phosphate reductase, found in Salmonella typhi.